A 468-amino-acid polypeptide reads, in one-letter code: Heparan-sulfate 6-O-sulfotransferase 2 (468 aa).

Residues 1 to 9 lie on the Cytoplasmic side of the membrane; that stretch reads MDGKSNYSR. The chain crosses the membrane as a helical; Signal-anchor for type II membrane protein span at residues 10 to 30; it reads LLIALLMILFFGGIVLQYICS. At 31 to 468 the chain is on the lumenal side; sequence TSDWQLLHLA…DYLENVEQWR (438 aa). N-linked (GlcNAc...) asparagine glycosylation is present at asparagine 79. 103–111 provides a ligand contact to 3'-phosphoadenylyl sulfate; sequence HIQKTGGTT. Substrate-binding positions include 133–134, arginine 150, tryptophan 155, and histidine 160; that span reads KK. The active-site Proton acceptor is histidine 160. 3'-phosphoadenylyl sulfate is bound by residues arginine 197 and serine 205. The substrate site is built by histidine 209 and tryptophan 216. An N-linked (GlcNAc...) asparagine glycan is attached at asparagine 276. Position 329-331 (329-331) interacts with 3'-phosphoadenylyl sulfate; sequence TQL. A glycan (N-linked (GlcNAc...) asparagine) is linked at asparagine 332. 335-336 contacts 3'-phosphoadenylyl sulfate; sequence RA. Positions 409-447 are disordered; that stretch reads FKPTKEPPMTEQSPAFAEEKQADAERTLESETEGQVEEN. Residues 425 to 437 show a composition bias toward basic and acidic residues; that stretch reads AEEKQADAERTLE. Over residues 438–447 the composition is skewed to acidic residues; the sequence is SETEGQVEEN.

It belongs to the sulfotransferase 6 family. Expressed ubiquitously during gastrulation. During early somitogenesis, strong expression in head and presumptive brain. During mid-somitogenesis, strong expression in eye, hindbrain and somitic boundaries and weak expression in tail bud. During late somitogenesis, strong expression in eye, hindbrain, branchial arch primordia, spinal cord and ventral medial somites. At 24 hours post-fertilization (hpf), strong expression throughout the head, with expression receeding from the trunk spinal cord, ventral medial somites and somitic boundaries; expressed in cells surrounding vascular structures of the dorsal aorta and caudal vein in the tail. At 36 hpf, expressed in lens, optic stalk, hindbrain and pectoral fin. At 48 hpf, expressed in eye, brain, otic vesicle and branchial arches.

The protein localises to the membrane. The enzyme catalyses alpha-D-glucosaminyl-[heparan sulfate](n) + 3'-phosphoadenylyl sulfate = 6-sulfo-alpha-D-glucosaminyl-[heparan sulfate](n) + adenosine 3',5'-bisphosphate + H(+). Its function is as follows. 6-O-sulfation enzyme which catalyzes the transfer of sulfate from 3'-phosphoadenosine 5'-phosphosulfate (PAPS) to position 6 of the N-sulfoglucosamine residue (GlcNS) of heparan sulfate. Required for muscle development and angiogenesis. The polypeptide is Heparan-sulfate 6-O-sulfotransferase 2 (hs6st2) (Danio rerio (Zebrafish)).